A 253-amino-acid polypeptide reads, in one-letter code: Imidazole glycerol phosphate synthase subunit HisF (253 aa).

Catalysis depends on residues aspartate 11 and aspartate 130.

It belongs to the HisA/HisF family. Heterodimer of HisH and HisF.

The protein localises to the cytoplasm. The catalysed reaction is 5-[(5-phospho-1-deoxy-D-ribulos-1-ylimino)methylamino]-1-(5-phospho-beta-D-ribosyl)imidazole-4-carboxamide + L-glutamine = D-erythro-1-(imidazol-4-yl)glycerol 3-phosphate + 5-amino-1-(5-phospho-beta-D-ribosyl)imidazole-4-carboxamide + L-glutamate + H(+). It participates in amino-acid biosynthesis; L-histidine biosynthesis; L-histidine from 5-phospho-alpha-D-ribose 1-diphosphate: step 5/9. Its function is as follows. IGPS catalyzes the conversion of PRFAR and glutamine to IGP, AICAR and glutamate. The HisF subunit catalyzes the cyclization activity that produces IGP and AICAR from PRFAR using the ammonia provided by the HisH subunit. This is Imidazole glycerol phosphate synthase subunit HisF from Roseobacter denitrificans (strain ATCC 33942 / OCh 114) (Erythrobacter sp. (strain OCh 114)).